Here is a 761-residue protein sequence, read N- to C-terminus: BMP/retinoic acid-inducible neural-specific protein 1 (761 aa).

The N-terminal stretch at 1 to 22 is a signal peptide; that stretch reads MNWRLVEFLYLLFIWDHILVQP. One can recognise an MACPF domain in the interval 68 to 251; sequence RYKIYREFAR…FVQSALSYIM (184 aa). N-linked (GlcNAc...) asparagine glycans are attached at residues asparagine 156, asparagine 433, asparagine 443, asparagine 553, asparagine 599, asparagine 631, and asparagine 677.

Belongs to the BRINP family.

It localises to the cytoplasm. Its function is as follows. Plays a role in neurogenesis and brain development. May suppress cell cycle progression in postmitotic neurons by inhibiting G1/S transition. The chain is BMP/retinoic acid-inducible neural-specific protein 1 (BRINP1) from Gallus gallus (Chicken).